Reading from the N-terminus, the 202-residue chain is Flagellar transcriptional regulator FlhC (202 aa).

Positions 137, 140, 157, and 160 each coordinate Zn(2+).

The protein belongs to the FlhC family. Heterohexamer composed of two FlhC and four FlhD subunits. Each FlhC binds a FlhD dimer, forming a heterotrimer, and a hexamer assembles by dimerization of two heterotrimers. It depends on Zn(2+) as a cofactor.

It localises to the cytoplasm. Its function is as follows. Functions in complex with FlhD as a master transcriptional regulator that regulates transcription of several flagellar and non-flagellar operons by binding to their promoter region. Activates expression of class 2 flagellar genes, including fliA, which is a flagellum-specific sigma factor that turns on the class 3 genes. Also regulates genes whose products function in a variety of physiological pathways. The polypeptide is Flagellar transcriptional regulator FlhC (Variovorax paradoxus (strain S110)).